The primary structure comprises 723 residues: Polyribonucleotide nucleotidyltransferase (723 aa).

Positions 488 and 494 each coordinate Mg(2+). The KH domain occupies 555–614 (PKIITLNIKPEKIKDVIGPGGKQINAIIEETGVKIDIEQDGTVYIASQDQAMNRKAIAII). One can recognise an S1 motif domain in the interval 624–692 (GEVYTGKVRR…HQGRVNLSRK (69 aa)). The tract at residues 692 to 723 (KALLEKKEQPEGDKKPQAEKKFYPKTKKPESK) is disordered. Positions 693 to 723 (ALLEKKEQPEGDKKPQAEKKFYPKTKKPESK) are enriched in basic and acidic residues.

The protein belongs to the polyribonucleotide nucleotidyltransferase family. Mg(2+) is required as a cofactor.

It is found in the cytoplasm. It carries out the reaction RNA(n+1) + phosphate = RNA(n) + a ribonucleoside 5'-diphosphate. Functionally, involved in mRNA degradation. Catalyzes the phosphorolysis of single-stranded polyribonucleotides processively in the 3'- to 5'-direction. This Listeria innocua serovar 6a (strain ATCC BAA-680 / CLIP 11262) protein is Polyribonucleotide nucleotidyltransferase.